The sequence spans 490 residues: Arginine decarboxylase (490 aa).

Position 226 is an N6-(pyridoxal phosphate)lysine (lysine 226).

This sequence belongs to the Orn/Lys/Arg decarboxylase class-I family. The cofactor is pyridoxal 5'-phosphate.

It localises to the cytoplasm. It carries out the reaction L-arginine + H(+) = agmatine + CO2. The protein operates within amine and polyamine biosynthesis; agmatine biosynthesis; agmatine from L-arginine: step 1/1. Its function is as follows. Catalyzes the formation of agmatine from arginine. The sequence is that of Arginine decarboxylase (speA) from Bacillus subtilis (strain 168).